The primary structure comprises 221 residues: Leucine rich adaptor protein 1-like (221 aa).

Met-1 carries the post-translational modification N-acetylmethionine. The segment at 24 to 81 (LARSLRGEELAPREGAADPSGVGGSCSSSSSCSSFAPSVSSSSSSSPASGSPRRSHPS) is disordered. Basic and acidic residues predominate over residues 28 to 39 (LRGEELAPREGA). The span at 48–75 (SCSSSSSCSSFAPSVSSSSSSSPASGSP) shows a compositional bias: low complexity.

The sequence is that of Leucine rich adaptor protein 1-like (Lurap1l) from Mus musculus (Mouse).